The primary structure comprises 20 residues: Unknown protein from 2D-PAGE of needles (20 aa).

The polypeptide is Unknown protein from 2D-PAGE of needles (Pinus pinaster (Maritime pine)).